We begin with the raw amino-acid sequence, 1606 residues long: Thrombospondin type-1 domain-containing protein 7B (1606 aa).

The signal sequence occupies residues 1–31; the sequence is MFPKSNLTVTCWVWRSMRKLFLLLSLLLSHA. Residues 32-1555 are Extracellular-facing; it reads AHLEGKKDNQ…QPLDPDGRVK (1524 aa). TSP type-1 domains lie at 40–98, 102–177, 179–233, 336–392, 399–482, 484–543, 601–661, 662–735, 737–796, 797–869, 871–924, 925–998, 1000–1125, 1127–1181, 1182–1245, 1247–1302, 1303–1368, and 1370–1431; these read NQFI…RVCD, DLFQ…IPCP, DCVV…ISCP, DCET…IVEG, PRYS…IPCS, DCIV…PMCY, DCVL…HSCM, QLHW…LPCK, DCIV…SLCP, VYRW…VPCR, DCTF…CPCD, EFIS…IPCP, DCKL…LMCP, ECVM…ENCF, QFQY…VECV, NCQL…TPCY, SWVL…VPCP, and DCHL…GKCY. N150, N190, and N219 each carry an N-linked (GlcNAc...) asparagine glycan. 3 disulfides stabilise this stretch: C411–C477, C431–C481, and C442–C466. 3 cysteine pairs are disulfide-bonded: C602–C643, C613–C617, and C655–C660. Residue N683 is glycosylated (N-linked (GlcNAc...) asparagine). Disulfide bonds link C738–C779, C749–C753, and C789–C795. Residue N757 is glycosylated (N-linked (GlcNAc...) asparagine). N842 carries an N-linked (GlcNAc...) asparagine glycan. Intrachain disulfides connect C872/C907, C883/C887, and C921/C923. N933 carries an N-linked (GlcNAc...) asparagine glycan. Cystine bridges form between C937/C993, C959/C997, C970/C983, C1001/C1038, C1012/C1016, and C1120/C1124. A glycan (N-linked (GlcNAc...) asparagine) is linked at N1186. Intrachain disulfides connect C1248-C1286, C1259-C1263, and C1296-C1301. N1308 is a glycosylation site (N-linked (GlcNAc...) asparagine). Cystine bridges form between C1371-C1415, C1382-C1386, and C1425-C1430. N-linked (GlcNAc...) asparagine glycans are attached at residues N1456 and N1524. Residues 1556 to 1576 traverse the membrane as a helical segment; it reads IWVYGVSGGAFLIMIFLIFTS. The Cytoplasmic segment spans residues 1577 to 1606; that stretch reads YLVCKKPKPHQSTPPQQKPLTLAYDGDLDM. Residues 1583–1606 are disordered; the sequence is PKPHQSTPPQQKPLTLAYDGDLDM. Over residues 1586–1595 the composition is skewed to polar residues; that stretch reads HQSTPPQQKP.

The protein resides in the membrane. This Homo sapiens (Human) protein is Thrombospondin type-1 domain-containing protein 7B.